A 358-amino-acid polypeptide reads, in one-letter code: Peptide chain release factor 1 (358 aa).

Q233 bears the N5-methylglutamine mark.

It belongs to the prokaryotic/mitochondrial release factor family. In terms of processing, methylated by PrmC. Methylation increases the termination efficiency of RF1.

The protein localises to the cytoplasm. Its function is as follows. Peptide chain release factor 1 directs the termination of translation in response to the peptide chain termination codons UAG and UAA. In Geobacillus sp. (strain WCH70), this protein is Peptide chain release factor 1.